The following is a 38-amino-acid chain: Photosystem II reaction center protein L (38 aa).

Residues 17–37 traverse the membrane as a helical segment; the sequence is SLYWGLLLIFVLAVLFSNYFF.

It belongs to the PsbL family. As to quaternary structure, PSII is composed of 1 copy each of membrane proteins PsbA, PsbB, PsbC, PsbD, PsbE, PsbF, PsbH, PsbI, PsbJ, PsbK, PsbL, PsbM, PsbT, PsbX, PsbY, PsbZ, Psb30/Ycf12, at least 3 peripheral proteins of the oxygen-evolving complex and a large number of cofactors. It forms dimeric complexes.

The protein localises to the plastid. The protein resides in the chloroplast thylakoid membrane. In terms of biological role, one of the components of the core complex of photosystem II (PSII). PSII is a light-driven water:plastoquinone oxidoreductase that uses light energy to abstract electrons from H(2)O, generating O(2) and a proton gradient subsequently used for ATP formation. It consists of a core antenna complex that captures photons, and an electron transfer chain that converts photonic excitation into a charge separation. This subunit is found at the monomer-monomer interface and is required for correct PSII assembly and/or dimerization. This chain is Photosystem II reaction center protein L, found in Oenothera argillicola (Appalachian evening primrose).